A 196-amino-acid polypeptide reads, in one-letter code: uncharacterized protein (196 aa).

Residues 20-40 traverse the membrane as a helical segment; that stretch reads GALALGCIALLLMGIVGCTTV.

It localises to the membrane. This is an uncharacterized protein from Mycobacterium tuberculosis (strain CDC 1551 / Oshkosh).